A 391-amino-acid chain; its full sequence is 3-ketoacyl-CoA thiolase (391 aa).

C95 (acyl-thioester intermediate) is an active-site residue. Residues H347 and C377 each act as proton acceptor in the active site.

This sequence belongs to the thiolase-like superfamily. Thiolase family. As to quaternary structure, heterotetramer of two alpha chains (FadB) and two beta chains (FadA).

It is found in the cytoplasm. It carries out the reaction an acyl-CoA + acetyl-CoA = a 3-oxoacyl-CoA + CoA. It participates in lipid metabolism; fatty acid beta-oxidation. Its function is as follows. Catalyzes the final step of fatty acid oxidation in which acetyl-CoA is released and the CoA ester of a fatty acid two carbons shorter is formed. This is 3-ketoacyl-CoA thiolase from Marinobacter nauticus (strain ATCC 700491 / DSM 11845 / VT8) (Marinobacter aquaeolei).